The chain runs to 553 residues: Probable malate:quinone oxidoreductase (553 aa).

A compositionally biased stretch (low complexity) spans 534 to 543; it reads QLKPQVQPQP. Residues 534–553 are disordered; sequence QLKPQVQPQPAHKAVADIAL.

This sequence belongs to the MQO family. It depends on FAD as a cofactor.

It catalyses the reaction (S)-malate + a quinone = a quinol + oxaloacetate. It participates in carbohydrate metabolism; tricarboxylic acid cycle; oxaloacetate from (S)-malate (quinone route): step 1/1. In Citrobacter koseri (strain ATCC BAA-895 / CDC 4225-83 / SGSC4696), this protein is Probable malate:quinone oxidoreductase.